A 274-amino-acid polypeptide reads, in one-letter code: Purine nucleoside phosphorylase YlmD (274 aa).

Inosine is bound at residue 46 to 47 (LH). Zn(2+)-binding residues include His-80, Cys-125, His-142, Cys-182, Cys-183, Cys-242, and Cys-245. Arg-262 contributes to the inosine binding site.

Belongs to the purine nucleoside phosphorylase YfiH/LACC1 family. Zn(2+) is required as a cofactor.

The catalysed reaction is adenosine + phosphate = alpha-D-ribose 1-phosphate + adenine. It catalyses the reaction S-methyl-5'-thioadenosine + phosphate = 5-(methylsulfanyl)-alpha-D-ribose 1-phosphate + adenine. The enzyme catalyses inosine + phosphate = alpha-D-ribose 1-phosphate + hypoxanthine. It carries out the reaction adenosine + H2O + H(+) = inosine + NH4(+). Functionally, purine nucleoside enzyme that catalyzes the phosphorolysis of adenosine and inosine nucleosides, yielding D-ribose 1-phosphate and the respective free bases, adenine and hypoxanthine. Also catalyzes the phosphorolysis of S-methyl-5'-thioadenosine into adenine and S-methyl-5-thio-alpha-D-ribose 1-phosphate. Also has adenosine deaminase activity. The chain is Purine nucleoside phosphorylase YlmD from Geobacillus stearothermophilus (strain DSM 13240 / CIP 106956 / 10).